The chain runs to 213 residues: Probable thymidylate kinase 2 (213 aa).

Position 10–17 (10–17 (GIDGSGKS)) interacts with ATP.

The protein belongs to the thymidylate kinase family.

It catalyses the reaction dTMP + ATP = dTDP + ADP. The sequence is that of Probable thymidylate kinase 2 (tmk2) from Saccharolobus solfataricus (strain ATCC 35092 / DSM 1617 / JCM 11322 / P2) (Sulfolobus solfataricus).